A 188-amino-acid polypeptide reads, in one-letter code: dCTP deaminase (188 aa).

DCTP-binding positions include 111 to 116, 135 to 137, Gln156, Tyr170, and Gln180; these read KSTYAR and TLE. The Proton donor/acceptor role is filled by Glu137.

The protein belongs to the dCTP deaminase family. In terms of assembly, homotrimer.

The enzyme catalyses dCTP + H2O + H(+) = dUTP + NH4(+). It functions in the pathway pyrimidine metabolism; dUMP biosynthesis; dUMP from dCTP (dUTP route): step 1/2. In terms of biological role, catalyzes the deamination of dCTP to dUTP. This Pseudomonas aeruginosa (strain UCBPP-PA14) protein is dCTP deaminase.